Here is a 375-residue protein sequence, read N- to C-terminus: Vasculin (375 aa).

Disordered stretches follow at residues 49 to 109 (SSDA…TSEI) and 356 to 375 (DSVQKEDSETSSSSDTSDDE). Over residues 96–108 (MKSQLHSENNTSE) the composition is skewed to polar residues. Residues 365-375 (TSSSSDTSDDE) are compositionally biased toward low complexity.

Belongs to the vasculin family.

It is found in the nucleus. In terms of biological role, functions as a GC-rich promoter-specific transactivating transcription factor. In Xenopus tropicalis (Western clawed frog), this protein is Vasculin (gpbp1).